The sequence spans 258 residues: Aspartate/glutamate leucyltransferase (258 aa).

It belongs to the R-transferase family. Bpt subfamily.

The protein localises to the cytoplasm. It carries out the reaction N-terminal L-glutamyl-[protein] + L-leucyl-tRNA(Leu) = N-terminal L-leucyl-L-glutamyl-[protein] + tRNA(Leu) + H(+). The catalysed reaction is N-terminal L-aspartyl-[protein] + L-leucyl-tRNA(Leu) = N-terminal L-leucyl-L-aspartyl-[protein] + tRNA(Leu) + H(+). In terms of biological role, functions in the N-end rule pathway of protein degradation where it conjugates Leu from its aminoacyl-tRNA to the N-termini of proteins containing an N-terminal aspartate or glutamate. This Rhizobium etli (strain ATCC 51251 / DSM 11541 / JCM 21823 / NBRC 15573 / CFN 42) protein is Aspartate/glutamate leucyltransferase.